The chain runs to 260 residues: Ribosomal RNA small subunit methyltransferase A (260 aa).

Positions 23, 48, 69, 94, and 110 each coordinate S-adenosyl-L-methionine.

This sequence belongs to the class I-like SAM-binding methyltransferase superfamily. rRNA adenine N(6)-methyltransferase family. RsmA subfamily.

Its subcellular location is the cytoplasm. The catalysed reaction is adenosine(1518)/adenosine(1519) in 16S rRNA + 4 S-adenosyl-L-methionine = N(6)-dimethyladenosine(1518)/N(6)-dimethyladenosine(1519) in 16S rRNA + 4 S-adenosyl-L-homocysteine + 4 H(+). In terms of biological role, specifically dimethylates two adjacent adenosines (A1518 and A1519) in the loop of a conserved hairpin near the 3'-end of 16S rRNA in the 30S particle. May play a critical role in biogenesis of 30S subunits. This Thermotoga neapolitana (strain ATCC 49049 / DSM 4359 / NBRC 107923 / NS-E) protein is Ribosomal RNA small subunit methyltransferase A.